The sequence spans 770 residues: tRNA(Met) cytidine acetyltransferase TmcA 2 (770 aa).

ATP contacts are provided by Gln-209 and Arg-390. Residues 458–608 (MIMLDGIHHK…YPVVVIRPIS (151 aa)) enclose the N-acetyltransferase domain. 533–535 (IAV) contributes to the acetyl-CoA binding site.

It belongs to the TmcA family.

Its subcellular location is the cytoplasm. The enzyme catalyses cytidine(34) in elongator tRNA(Met) + acetyl-CoA + ATP + H2O = N(4)-acetylcytidine(34) in elongator tRNA(Met) + ADP + phosphate + CoA + H(+). It carries out the reaction a cytidine in RNA + acetyl-CoA + ATP + H2O = an N(4)-acetylcytidine in RNA + ADP + phosphate + CoA + H(+). It catalyses the reaction a cytidine in tRNA + acetyl-CoA + ATP + H2O = an N(4)-acetylcytidine in tRNA + ADP + phosphate + CoA + H(+). The catalysed reaction is a cytidine in mRNA + acetyl-CoA + ATP + H2O = an N(4)-acetylcytidine in mRNA + ADP + phosphate + CoA + H(+). Its function is as follows. Catalyzes the formation of N(4)-acetylcytidine (ac(4)C) at the wobble position of tRNA(Met), by using acetyl-CoA as an acetyl donor and ATP (or GTP). Catalyzes the formation of 41 N(4)-acetylcytidine (ac(4)C) sites in RNA, almost always on the middle C of a CCG motif. Modifications are found mostly in tRNA, with small amounts found in rRNA and mRNA. This is tRNA(Met) cytidine acetyltransferase TmcA 2 from Saccharolobus solfataricus (strain ATCC 35092 / DSM 1617 / JCM 11322 / P2) (Sulfolobus solfataricus).